Consider the following 270-residue polypeptide: 4-hydroxy-tetrahydrodipicolinate reductase (270 aa).

Residues 11 to 16 (GASGRM) and Glu37 each bind NAD(+). Arg38 provides a ligand contact to NADP(+). NAD(+)-binding positions include 101-103 (GTT) and 125-128 (APNM). The active-site Proton donor/acceptor is His158. A (S)-2,3,4,5-tetrahydrodipicolinate-binding site is contributed by His159. Lys162 (proton donor) is an active-site residue. Residue 168-169 (GT) coordinates (S)-2,3,4,5-tetrahydrodipicolinate.

This sequence belongs to the DapB family.

Its subcellular location is the cytoplasm. It carries out the reaction (S)-2,3,4,5-tetrahydrodipicolinate + NAD(+) + H2O = (2S,4S)-4-hydroxy-2,3,4,5-tetrahydrodipicolinate + NADH + H(+). It catalyses the reaction (S)-2,3,4,5-tetrahydrodipicolinate + NADP(+) + H2O = (2S,4S)-4-hydroxy-2,3,4,5-tetrahydrodipicolinate + NADPH + H(+). Its pathway is amino-acid biosynthesis; L-lysine biosynthesis via DAP pathway; (S)-tetrahydrodipicolinate from L-aspartate: step 4/4. In terms of biological role, catalyzes the conversion of 4-hydroxy-tetrahydrodipicolinate (HTPA) to tetrahydrodipicolinate. The protein is 4-hydroxy-tetrahydrodipicolinate reductase of Shewanella amazonensis (strain ATCC BAA-1098 / SB2B).